A 285-amino-acid chain; its full sequence is Gap junction Cx32.2 protein (285 aa).

The Cytoplasmic segment spans residues 2-19; sequence GDLGFLSKLLDQVQSHST. Residues 20–40 traverse the membrane as a helical segment; the sequence is VIGKIWMTVLFLFRIMVLGAG. The Extracellular portion of the chain corresponds to 41–76; sequence AESVWGDEQSDFTCNTQQPGCENVCYDWTFPISHIR. Residues 77 to 99 traverse the membrane as a helical segment; it reads FWVLQIIFVSTPTLIYLGHAMHI. Over 100–148 the chain is Cytoplasmic; the sequence is IQQETKLRARLSSPGGSRLCKQPKYTNEQGKVKIKGNLLGSYLTQLVFK. A helical membrane pass occupies residues 149–171; that stretch reads IIIEAAFIVGQYYLYGFIMVPMF. At 172–194 the chain is on the extracellular side; it reads PCSKKPCPFTVECYMSRPTEKTI. The helical transmembrane segment at 195–217 threads the bilayer; the sequence is FIIFMLVVACVSLLLNVIEVFYL. Residues 218–285 are Cytoplasmic-facing; the sequence is ICTRVRCGSR…AKEEKRLLSH (68 aa). The disordered stretch occupies residues 264–285; the sequence is ETSQSIGGSLDGAKEEKRLLSH. Residues 275-285 show a composition bias toward basic and acidic residues; that stretch reads GAKEEKRLLSH.

This sequence belongs to the connexin family. Beta-type (group I) subfamily. A connexon is composed of a hexamer of connexins.

Its subcellular location is the cell membrane. The protein localises to the cell junction. It localises to the gap junction. One gap junction consists of a cluster of closely packed pairs of transmembrane channels, the connexons, through which materials of low MW diffuse from one cell to a neighboring cell. May be involved in ovarian follicular maturation. The chain is Gap junction Cx32.2 protein from Micropogonias undulatus (Atlantic croaker).